The primary structure comprises 196 residues: MSYYAFEGLIPVVHPTAFVHPSAVLIGDVIVGAGVYIGPLASLRGDYGRLIVQAGANIQDGCIMHGYCDTDTIVGENGHIGHGAILHGCVIGRDALVGMNSVIMDGAVIGEESIVAAMSFVKAGFHGEKRQLLMGTPARAVRSVSDDELHWKRLNTKEYQDLVGRCHASLHETQPLRQMEENRPRLQGTTDVTPKR.

A disordered region spans residues 173–196 (TQPLRQMEENRPRLQGTTDVTPKR). Polar residues predominate over residues 187–196 (QGTTDVTPKR).

It belongs to the transferase hexapeptide repeat family.

It participates in amine and polyamine metabolism; carnitine metabolism. Overproduction of CaiE stimulates the activity of CaiB and CaiD. This Escherichia coli O139:H28 (strain E24377A / ETEC) protein is Carnitine operon protein CaiE.